Consider the following 341-residue polypeptide: NADH-ubiquinone oxidoreductase chain 2 (341 aa).

The next 10 membrane-spanning stretches (helical) occupy residues 8–28, 61–81, 95–115, 121–141, 146–166, 174–194, 195–215, 238–258, 273–293, and 321–341; these read ILFT…NSWL, FLTQ…LMLA, MIIM…FWFP, LTWM…LMLI, IKNL…IGGL, LMAF…MISE, SIWL…TFMF, FSLF…GFLP, FLLT…LRIC, and LIMT…FFML.

This sequence belongs to the complex I subunit 2 family.

It localises to the mitochondrion inner membrane. The catalysed reaction is a ubiquinone + NADH + 5 H(+)(in) = a ubiquinol + NAD(+) + 4 H(+)(out). In terms of biological role, core subunit of the mitochondrial membrane respiratory chain NADH dehydrogenase (Complex I) that is believed to belong to the minimal assembly required for catalysis. Complex I functions in the transfer of electrons from NADH to the respiratory chain. The immediate electron acceptor for the enzyme is believed to be ubiquinone. This Drosophila yakuba (Fruit fly) protein is NADH-ubiquinone oxidoreductase chain 2 (mt:ND2).